The chain runs to 226 residues: Leucyl/phenylalanyl-tRNA--protein transferase (226 aa).

Belongs to the L/F-transferase family.

It is found in the cytoplasm. It catalyses the reaction N-terminal L-lysyl-[protein] + L-leucyl-tRNA(Leu) = N-terminal L-leucyl-L-lysyl-[protein] + tRNA(Leu) + H(+). The catalysed reaction is N-terminal L-arginyl-[protein] + L-leucyl-tRNA(Leu) = N-terminal L-leucyl-L-arginyl-[protein] + tRNA(Leu) + H(+). The enzyme catalyses L-phenylalanyl-tRNA(Phe) + an N-terminal L-alpha-aminoacyl-[protein] = an N-terminal L-phenylalanyl-L-alpha-aminoacyl-[protein] + tRNA(Phe). Its function is as follows. Functions in the N-end rule pathway of protein degradation where it conjugates Leu, Phe and, less efficiently, Met from aminoacyl-tRNAs to the N-termini of proteins containing an N-terminal arginine or lysine. The chain is Leucyl/phenylalanyl-tRNA--protein transferase from Ectopseudomonas mendocina (strain ymp) (Pseudomonas mendocina).